Here is a 398-residue protein sequence, read N- to C-terminus: Enolase (398 aa).

Position 154 (glutamine 154) interacts with (2R)-2-phosphoglycerate. The active-site Proton donor is glutamate 196. Mg(2+)-binding residues include aspartate 232, glutamate 273, and aspartate 300. Residues lysine 325, arginine 354, serine 355, and lysine 376 each contribute to the (2R)-2-phosphoglycerate site. Lysine 325 (proton acceptor) is an active-site residue.

Belongs to the enolase family. The cofactor is Mg(2+).

The protein resides in the cytoplasm. The protein localises to the secreted. It localises to the cell surface. The enzyme catalyses (2R)-2-phosphoglycerate = phosphoenolpyruvate + H2O. The protein operates within carbohydrate degradation; glycolysis; pyruvate from D-glyceraldehyde 3-phosphate: step 4/5. Catalyzes the reversible conversion of 2-phosphoglycerate (2-PG) into phosphoenolpyruvate (PEP). It is essential for the degradation of carbohydrates via glycolysis. The protein is Enolase of Natronomonas pharaonis (strain ATCC 35678 / DSM 2160 / CIP 103997 / JCM 8858 / NBRC 14720 / NCIMB 2260 / Gabara) (Halobacterium pharaonis).